Here is a 1435-residue protein sequence, read N- to C-terminus: Gag-Pol polyprotein (1435 aa).

Gly-2 carries the N-myristoyl glycine; by host lipid modification. The interval 7–31 (VLSGGKLDKWEKIRLRPGGKKKYRL) is interaction with Gp41. The interaction with host CALM1 stretch occupies residues 8 to 43 (LSGGKLDKWEKIRLRPGGKKKYRLKHIVWASRELER). Residues 12 to 19 (KLDKWEKI) form an interaction with host AP3D1 region. An interaction with membrane phosphatidylinositol 4,5-bisphosphate and RNA region spans residues 14–33 (DKWEKIRLRPGGKKKYRLKH). The short motif at 16–22 (WEKIRLR) is the Nuclear export signal element. The short motif at 26 to 32 (KKKYRLK) is the Nuclear localization signal element. The segment at 73-77 (EELRS) is interaction with membrane phosphatidylinositol 4,5-bisphosphate. The interval 102-128 (EKMEEEQNKSKKKAQQAAADTGNNSQV) is disordered. Residue Tyr-132 is modified to Phosphotyrosine; by host. Residues 189 to 227 (NTVGGHQAAMQMLKETINEEAAEWDRLHPVHAGPIAPGQ) are interaction with human PPIA/CYPA and NUP153. Residues 277 to 363 (YSPVSILDIR…GGPSHKARVL (87 aa)) are dimerization/Multimerization of capsid protein p24. 2 consecutive CCHC-type zinc fingers follow at residues 391-408 (IKCFNCGKEGHIAKNCRA) and 412-429 (KGCWRCGKEGHQLKDCTE). The segment at 489 to 493 (PQITL) is dimerization of protease. Residues 508-577 (KEALLDTGAD…TPVNIIGRNL (70 aa)) form the Peptidase A2 domain. The active-site For protease activity; shared with dimeric partner is the Asp-513. Dimerization of protease regions lie at residues 537-543 (GIGGFIK) and 576-588 (NLLTQIGCTLNFP). In terms of domain architecture, Reverse transcriptase spans 631–821 (EGKISRIGPE…PPFLWMGYEL (191 aa)). Mg(2+)-binding residues include Asp-697, Asp-772, and Asp-773. The RT 'primer grip' stretch occupies residues 814 to 822 (FLWMGYELH). A Tryptophan repeat motif motif is present at residues 985–1001 (WETWWAEYWQATWIPEW). The region spanning 1021 to 1144 (IIGAETFYVD…VDKLVSQGIR (124 aa)) is the RNase H type-1 domain. The Mg(2+) site is built by Asp-1030, Glu-1065, Asp-1085, and Asp-1136. The segment at 1150–1191 (DGIDKAQEEHEKYHNNWRAMASDFNLPPVVAKEIVASCDKCQ) adopts an Integrase-type zinc-finger fold. Zn(2+) contacts are provided by His-1159, His-1163, Cys-1187, and Cys-1190. The Integrase catalytic domain maps to 1201-1351 (VDCSPGIWQL…SAGERIIDII (151 aa)). Positions 1211, 1263, and 1299 each coordinate Mg(2+). Positions 1370–1417 (FRVYYRDSRDPIWKGPAKLLWKGEGAVVIQDKSDIKVVPRRKVKIIRD) form a DNA-binding region, integrase-type.

As to quaternary structure, homotrimer; further assembles as hexamers of trimers. Interacts with gp41 (via C-terminus). Interacts with host CALM1; this interaction induces a conformational change in the Matrix protein, triggering exposure of the myristate group. Interacts with host AP3D1; this interaction allows the polyprotein trafficking to multivesicular bodies during virus assembly. Part of the pre-integration complex (PIC) which is composed of viral genome, matrix protein, Vpr and integrase. In terms of assembly, homodimer; the homodimer further multimerizes as homohexamers or homopentamers. Interacts with human PPIA/CYPA; This interaction stabilizes the capsid. Interacts with human NUP153. Interacts with host PDZD8; this interaction stabilizes the capsid. Interacts with monkey TRIM5; this interaction destabilizes the capsid. Homodimer, whose active site consists of two apposed aspartic acid residues. As to quaternary structure, heterodimer of p66 RT and p51 RT (RT p66/p51). Heterodimerization of RT is essential for DNA polymerase activity. The overall folding of the subdomains is similar in p66 RT and p51 RT but the spatial arrangements of the subdomains are dramatically different. In terms of assembly, homotetramer; may further associate as a homohexadecamer. Part of the pre-integration complex (PIC) which is composed of viral genome, matrix protein, Vpr and integrase. Interacts with human SMARCB1/INI1 and human PSIP1/LEDGF isoform 1. Interacts with human KPNA3; this interaction might play a role in nuclear import of the pre-integration complex. Interacts with human NUP153; this interaction might play a role in nuclear import of the pre-integration complex. Mg(2+) is required as a cofactor. In terms of processing, specific enzymatic cleavages by the viral protease yield mature proteins. The protease is released by autocatalytic cleavage. The polyprotein is cleaved during and after budding, this process is termed maturation. Proteolytic cleavage of p66 RT removes the RNase H domain to yield the p51 RT subunit. Nucleocapsid protein p7 might be further cleaved after virus entry. Tyrosine phosphorylated presumably in the virion by a host kinase. Phosphorylation is apparently not a major regulator of membrane association. Post-translationally, phosphorylated possibly by host MAPK1; this phosphorylation is necessary for Pin1-mediated virion uncoating. In terms of processing, methylated by host PRMT6, impairing its function by reducing RNA annealing and the initiation of reverse transcription.

Its subcellular location is the host cell membrane. It is found in the host endosome. It localises to the host multivesicular body. The protein localises to the virion membrane. The protein resides in the host nucleus. Its subcellular location is the host cytoplasm. It is found in the virion. It catalyses the reaction Specific for a P1 residue that is hydrophobic, and P1' variable, but often Pro.. It carries out the reaction Endohydrolysis of RNA in RNA/DNA hybrids. Three different cleavage modes: 1. sequence-specific internal cleavage of RNA. Human immunodeficiency virus type 1 and Moloney murine leukemia virus enzymes prefer to cleave the RNA strand one nucleotide away from the RNA-DNA junction. 2. RNA 5'-end directed cleavage 13-19 nucleotides from the RNA end. 3. DNA 3'-end directed cleavage 15-20 nucleotides away from the primer terminus.. The catalysed reaction is 3'-end directed exonucleolytic cleavage of viral RNA-DNA hybrid.. The enzyme catalyses DNA(n) + a 2'-deoxyribonucleoside 5'-triphosphate = DNA(n+1) + diphosphate. With respect to regulation, protease: The viral protease is inhibited by many synthetic protease inhibitors (PIs), such as amprenavir, atazanavir, indinavir, loprinavir, nelfinavir, ritonavir and saquinavir. Use of protease inhibitors in tritherapy regimens permit more ambitious therapeutic strategies. Reverse transcriptase/ribonuclease H: RT can be inhibited either by nucleoside RT inhibitors (NRTIs) or by non nucleoside RT inhibitors (NNRTIs). NRTIs act as chain terminators, whereas NNRTIs inhibit DNA polymerization by binding a small hydrophobic pocket near the RT active site and inducing an allosteric change in this region. Classical NRTIs are abacavir, adefovir (PMEA), didanosine (ddI), lamivudine (3TC), stavudine (d4T), tenofovir (PMPA), zalcitabine (ddC), and zidovudine (AZT). Classical NNRTIs are atevirdine (BHAP U-87201E), delavirdine, efavirenz (DMP-266), emivirine (I-EBU), and nevirapine (BI-RG-587). The tritherapies used as a basic effective treatment of AIDS associate two NRTIs and one NNRTI. Its function is as follows. Mediates, with Gag polyprotein, the essential events in virion assembly, including binding the plasma membrane, making the protein-protein interactions necessary to create spherical particles, recruiting the viral Env proteins, and packaging the genomic RNA via direct interactions with the RNA packaging sequence (Psi). Gag-Pol polyprotein may regulate its own translation, by the binding genomic RNA in the 5'-UTR. At low concentration, the polyprotein would promote translation, whereas at high concentration, the polyprotein would encapsidate genomic RNA and then shut off translation. Functionally, targets the polyprotein to the plasma membrane via a multipartite membrane-binding signal, that includes its myristoylated N-terminus. Matrix protein is part of the pre-integration complex. Implicated in the release from host cell mediated by Vpu. Binds to RNA. Forms the conical core that encapsulates the genomic RNA-nucleocapsid complex in the virion. Most core are conical, with only 7% tubular. The core is constituted by capsid protein hexamer subunits. The core is disassembled soon after virion entry. Host restriction factors such as TRIM5-alpha or TRIMCyp bind retroviral capsids and cause premature capsid disassembly, leading to blocks in reverse transcription. Capsid restriction by TRIM5 is one of the factors which restricts HIV-1 to the human species. Host PIN1 apparently facilitates the virion uncoating. On the other hand, interactions with PDZD8 or CYPA stabilize the capsid. In terms of biological role, encapsulates and protects viral dimeric unspliced genomic RNA (gRNA). Binds these RNAs through its zinc fingers. Acts as a nucleic acid chaperone which is involved in rearangement of nucleic acid secondary structure during gRNA retrotranscription. Also facilitates template switch leading to recombination. As part of the polyprotein, participates in gRNA dimerization, packaging, tRNA incorporation and virion assembly. Its function is as follows. Aspartyl protease that mediates proteolytic cleavages of Gag and Gag-Pol polyproteins during or shortly after the release of the virion from the plasma membrane. Cleavages take place as an ordered, step-wise cascade to yield mature proteins. This process is called maturation. Displays maximal activity during the budding process just prior to particle release from the cell. Also cleaves Nef and Vif, probably concomitantly with viral structural proteins on maturation of virus particles. Hydrolyzes host EIF4GI and PABP1 in order to shut off the capped cellular mRNA translation. The resulting inhibition of cellular protein synthesis serves to ensure maximal viral gene expression and to evade host immune response. Also mediates cleavage of host YTHDF3. Mediates cleavage of host CARD8, thereby activating the CARD8 inflammasome, leading to the clearance of latent HIV-1 in patient CD4(+) T-cells after viral reactivation; in contrast, HIV-1 can evade CARD8-sensing when its protease remains inactive in infected cells prior to viral budding. Functionally, multifunctional enzyme that converts the viral RNA genome into dsDNA in the cytoplasm, shortly after virus entry into the cell. This enzyme displays a DNA polymerase activity that can copy either DNA or RNA templates, and a ribonuclease H (RNase H) activity that cleaves the RNA strand of RNA-DNA heteroduplexes in a partially processive 3' to 5' endonucleasic mode. Conversion of viral genomic RNA into dsDNA requires many steps. A tRNA(3)-Lys binds to the primer-binding site (PBS) situated at the 5'-end of the viral RNA. RT uses the 3' end of the tRNA primer to perform a short round of RNA-dependent minus-strand DNA synthesis. The reading proceeds through the U5 region and ends after the repeated (R) region which is present at both ends of viral RNA. The portion of the RNA-DNA heteroduplex is digested by the RNase H, resulting in a ssDNA product attached to the tRNA primer. This ssDNA/tRNA hybridizes with the identical R region situated at the 3' end of viral RNA. This template exchange, known as minus-strand DNA strong stop transfer, can be either intra- or intermolecular. RT uses the 3' end of this newly synthesized short ssDNA to perform the RNA-dependent minus-strand DNA synthesis of the whole template. RNase H digests the RNA template except for two polypurine tracts (PPTs) situated at the 5'-end and near the center of the genome. It is not clear if both polymerase and RNase H activities are simultaneous. RNase H probably can proceed both in a polymerase-dependent (RNA cut into small fragments by the same RT performing DNA synthesis) and a polymerase-independent mode (cleavage of remaining RNA fragments by free RTs). Secondly, RT performs DNA-directed plus-strand DNA synthesis using the PPTs that have not been removed by RNase H as primers. PPTs and tRNA primers are then removed by RNase H. The 3' and 5' ssDNA PBS regions hybridize to form a circular dsDNA intermediate. Strand displacement synthesis by RT to the PBS and PPT ends produces a blunt ended, linear dsDNA copy of the viral genome that includes long terminal repeats (LTRs) at both ends. Catalyzes viral DNA integration into the host chromosome, by performing a series of DNA cutting and joining reactions. This enzyme activity takes place after virion entry into a cell and reverse transcription of the RNA genome in dsDNA. The first step in the integration process is 3' processing. This step requires a complex comprising the viral genome, matrix protein, Vpr and integrase. This complex is called the pre-integration complex (PIC). The integrase protein removes 2 nucleotides from each 3' end of the viral DNA, leaving recessed CA OH's at the 3' ends. In the second step, the PIC enters cell nucleus. This process is mediated through integrase and Vpr proteins, and allows the virus to infect a non dividing cell. This ability to enter the nucleus is specific of lentiviruses, other retroviruses cannot and rely on cell division to access cell chromosomes. In the third step, termed strand transfer, the integrase protein joins the previously processed 3' ends to the 5' ends of strands of target cellular DNA at the site of integration. The 5'-ends are produced by integrase-catalyzed staggered cuts, 5 bp apart. A Y-shaped, gapped, recombination intermediate results, with the 5'-ends of the viral DNA strands and the 3' ends of target DNA strands remaining unjoined, flanking a gap of 5 bp. The last step is viral DNA integration into host chromosome. This involves host DNA repair synthesis in which the 5 bp gaps between the unjoined strands are filled in and then ligated. Since this process occurs at both cuts flanking the HIV genome, a 5 bp duplication of host DNA is produced at the ends of HIV-1 integration. Alternatively, Integrase may catalyze the excision of viral DNA just after strand transfer, this is termed disintegration. The polypeptide is Gag-Pol polyprotein (gag-pol) (Human immunodeficiency virus type 1 group M subtype D (isolate ELI) (HIV-1)).